The sequence spans 179 residues: Large ribosomal subunit protein uL10 (179 aa).

The protein belongs to the universal ribosomal protein uL10 family. In terms of assembly, part of the ribosomal stalk of the 50S ribosomal subunit. The N-terminus interacts with L11 and the large rRNA to form the base of the stalk. The C-terminus forms an elongated spine to which L12 dimers bind in a sequential fashion forming a multimeric L10(L12)X complex.

Functionally, forms part of the ribosomal stalk, playing a central role in the interaction of the ribosome with GTP-bound translation factors. The polypeptide is Large ribosomal subunit protein uL10 (Thermotoga petrophila (strain ATCC BAA-488 / DSM 13995 / JCM 10881 / RKU-1)).